Here is a 528-residue protein sequence, read N- to C-terminus: ADP,ATP carrier protein 1 (528 aa).

Transmembrane regions (helical) follow at residues 24–44 (LKKV…YTIL), 63–83 (IPFI…LIYA), 93–113 (ALFF…PVVI), 124–144 (AFAD…IAML), 149–169 (FAVF…LMFW), 184–204 (FYAL…PAII), 220–240 (WGVS…IIAA), 284–304 (YMLL…LVEV), 327–347 (FSFW…GNVI), 356–376 (ALVT…LVIF), 381–401 (TGLV…VGAI), and 463–483 (IGAM…VWLT).

The protein belongs to the ADP/ATP translocase tlc family.

The protein resides in the cell membrane. The protein is ADP,ATP carrier protein 1 (tlcA) of Chlamydia trachomatis serovar D (strain ATCC VR-885 / DSM 19411 / UW-3/Cx).